Consider the following 510-residue polypeptide: Hyaluronidase PH-20 (510 aa).

The first 35 residues, 1–35 (MGVLKFKHIFFRSFVKSSGVSQIVFTFLLIPCCLT), serve as a signal peptide directing secretion. 2 disulfides stabilise this stretch: Cys-60/Cys-351 and Cys-224/Cys-238. Residue Asn-82 is glycosylated (N-linked (GlcNAc...) asparagine). The active-site Proton donor is Glu-148. N-linked (GlcNAc...) asparagine glycans are attached at residues Asn-166, Asn-235, Asn-254, and Asn-368. Intrachain disulfides connect Cys-376–Cys-387, Cys-381–Cys-435, and Cys-437–Cys-464. N-linked (GlcNAc...) asparagine glycosylation is found at Asn-393, Asn-440, and Asn-484. The GPI-anchor amidated serine moiety is linked to residue Ser-491. The propeptide at 492–510 (TTMFIVNILFLIISSVASL) is removed in mature form.

It belongs to the glycosyl hydrolase 56 family. Testis.

It localises to the cell membrane. It carries out the reaction Random hydrolysis of (1-&gt;4)-linkages between N-acetyl-beta-D-glucosamine and D-glucuronate residues in hyaluronate.. Its function is as follows. Involved in sperm-egg adhesion. Upon fertilization sperm must first penetrate a layer of cumulus cells that surrounds the egg before reaching the zona pellucida. The cumulus cells are embedded in a matrix containing hyaluronic acid which is formed prior to ovulation. This protein aids in penetrating the layer of cumulus cells by digesting hyaluronic acid. The chain is Hyaluronidase PH-20 (SPAM1) from Macaca fascicularis (Crab-eating macaque).